Reading from the N-terminus, the 145-residue chain is I-leader protein (145 aa).

This sequence belongs to the adenoviridae leader protein family.

Its subcellular location is the host cytoplasm. It localises to the host perinuclear region. The protein is I-leader protein of Human adenovirus C serotype 5 (HAdV-5).